A 166-amino-acid polypeptide reads, in one-letter code: Small ribosomal subunit protein uS5 (166 aa).

The S5 DRBM domain maps to 11 to 74 (LQEKLVQVNR…DQARRNMVKV (64 aa)).

Belongs to the universal ribosomal protein uS5 family. Part of the 30S ribosomal subunit. Contacts proteins S4 and S8.

In terms of biological role, with S4 and S12 plays an important role in translational accuracy. Functionally, located at the back of the 30S subunit body where it stabilizes the conformation of the head with respect to the body. The protein is Small ribosomal subunit protein uS5 of Chromohalobacter salexigens (strain ATCC BAA-138 / DSM 3043 / CIP 106854 / NCIMB 13768 / 1H11).